We begin with the raw amino-acid sequence, 319 residues long: L-galactose dehydrogenase (319 aa).

Residue Y59 is the Proton donor of the active site. Positions 122–269 constitute an SIS domain; that stretch reads HCHDIEFGSL…ANKEISSVLV (148 aa). H124 contacts substrate.

Belongs to the aldo/keto reductase family.

The enzyme catalyses L-galactose + NAD(+) = L-galactono-1,4-lactone + NADH + H(+). Catalyzes the oxidation of L-galactose to L-galactono-1,4-lactone in the presence of NAD(+). Uses NAD(+) as a hydrogen acceptor much more efficiently than NADP(+). This is L-galactose dehydrogenase (LGALDH) from Arabidopsis thaliana (Mouse-ear cress).